Reading from the N-terminus, the 124-residue chain is Small ribosomal subunit protein uS13 (124 aa).

A disordered region spans residues 95–124 (GLPVRGQRTKTNARTRKGPKRTIAGKKKAR).

The protein belongs to the universal ribosomal protein uS13 family. Part of the 30S ribosomal subunit. Forms a loose heterodimer with protein S19. Forms two bridges to the 50S subunit in the 70S ribosome.

Located at the top of the head of the 30S subunit, it contacts several helices of the 16S rRNA. In the 70S ribosome it contacts the 23S rRNA (bridge B1a) and protein L5 of the 50S subunit (bridge B1b), connecting the 2 subunits; these bridges are implicated in subunit movement. Contacts the tRNAs in the A and P-sites. This is Small ribosomal subunit protein uS13 from Mycobacterium avium (strain 104).